Consider the following 213-residue polypeptide: Phosphatidylserine decarboxylase proenzyme (213 aa).

The active-site Schiff-base intermediate with substrate; via pyruvic acid is serine 182. Serine 182 is modified (pyruvic acid (Ser); by autocatalysis).

The protein belongs to the phosphatidylserine decarboxylase family. PSD-A subfamily. In terms of assembly, heterodimer of a large membrane-associated beta subunit and a small pyruvoyl-containing alpha subunit. Pyruvate serves as cofactor. Post-translationally, is synthesized initially as an inactive proenzyme. Formation of the active enzyme involves a self-maturation process in which the active site pyruvoyl group is generated from an internal serine residue via an autocatalytic post-translational modification. Two non-identical subunits are generated from the proenzyme in this reaction, and the pyruvate is formed at the N-terminus of the alpha chain, which is derived from the carboxyl end of the proenzyme. The post-translation cleavage follows an unusual pathway, termed non-hydrolytic serinolysis, in which the side chain hydroxyl group of the serine supplies its oxygen atom to form the C-terminus of the beta chain, while the remainder of the serine residue undergoes an oxidative deamination to produce ammonia and the pyruvoyl prosthetic group on the alpha chain.

It is found in the cell membrane. The enzyme catalyses a 1,2-diacyl-sn-glycero-3-phospho-L-serine + H(+) = a 1,2-diacyl-sn-glycero-3-phosphoethanolamine + CO2. The protein operates within phospholipid metabolism; phosphatidylethanolamine biosynthesis; phosphatidylethanolamine from CDP-diacylglycerol: step 2/2. In terms of biological role, catalyzes the formation of phosphatidylethanolamine (PtdEtn) from phosphatidylserine (PtdSer). The polypeptide is Phosphatidylserine decarboxylase proenzyme (Chlorobium phaeobacteroides (strain BS1)).